An 808-amino-acid polypeptide reads, in one-letter code: Aminotransferase ALT4 (808 aa).

It belongs to the class-II pyridoxal-phosphate-dependent aminotransferase family. BioF subfamily. It depends on pyridoxal 5'-phosphate as a cofactor.

It participates in mycotoxin biosynthesis. In terms of biological role, aminotransferase; part of the gene cluster that mediates the biosynthesis of the host-selective toxins (HSTs) AAL-toxins, sphinganine-analog mycotoxins responsible for Alternaria stem canker on tomato by the tomato pathotype. The biosynthesis starts with the polyketide synthase ALT1-catalyzed C-16 carbon chain assembly from one starter acetyl-CoA unit with malonyl-CoA extender units. ALT1 also selectively transfers methyl groups at the first and the third cycle of chain elongation for AAL toxin. The C-16 polyketide chain is released from the enzyme by a nucleophilic attack of a carbanion, which is derived from R-carbon of glycin by decarboxylation, on the carbonyl carbon of polyketide acyl chain. This step is probably catalyzed by a pyridoxal 5'-phosphate-dependent aminoacyl transferase ALT4. The respective functions of the other enzymes encoded by the cluster have still to be elucidated. The sphingosine N-acyltransferase-like protein ALT7 seems not to act as a resistance/self-tolerance factor against the toxin in the toxin biosynthetic gene cluster, contrary to what is expected. The sequence is that of Aminotransferase ALT4 from Alternaria alternata (Alternaria rot fungus).